Here is a 477-residue protein sequence, read N- to C-terminus: MTLRLFDTKAGALRDFVPLRSGEVGMYVCGPTVQASPHIGHLRSALVYDQLRRWLTYRGLAVTLVRNVTDIDDKVLANAAAAQAEGGSEQWWALAYRFEREFTAASVALGVQAPTYEPRATASIPQMQEIIQRLIERGHAYAAGDGSGDVYFDVRSWPAYGELTRQSADSMEAAADADPRAKRDGRDFALWKGRKADEPDSAAFPSPWGEGRPGWHIECSAMSRRYLGPRFDIHGGGLDLRFPHHENELAQSAAAGDSFANYWVHNGLVNVNGQKMSKSLGNSVSAAELLGAARPLAVRYSLGSAHYRSTIDYHDGSLSEAEAALERIAGFFERVDRRLAGTRFTGSGSEVVPIAFAEAMDDDLAVPQALAVLHETVRSGNAALDAEDLEAAAAARGQVFAMTEVLGINPLSPQWRQTGSSAAEQALGTLVERLLHNRQEARQVRDFVAADRIREELTGAGITIEDTPTGCHWSIEA.

Cys29 serves as a coordination point for Zn(2+). The 'HIGH' region motif lies at Pro31–His41. Residues Cys219, His244, and Glu248 each coordinate Zn(2+). The 'KMSKS' region motif lies at Lys275–Ser279. Lys278 is an ATP binding site.

Belongs to the class-I aminoacyl-tRNA synthetase family. As to quaternary structure, monomer. It depends on Zn(2+) as a cofactor.

The protein resides in the cytoplasm. The catalysed reaction is tRNA(Cys) + L-cysteine + ATP = L-cysteinyl-tRNA(Cys) + AMP + diphosphate. The sequence is that of Cysteine--tRNA ligase from Leifsonia xyli subsp. xyli (strain CTCB07).